The sequence spans 616 residues: Alpha terpineol synthase, chloroplastic (616 aa).

The transit peptide at 1–41 directs the protein to the chloroplast; that stretch reads MALLSVAPLQKPLTSCSPFSTTMPTLGVCTPRKVVTPSIIM. Positions 367, 371, and 519 each coordinate Mg(2+). A DDXXD motif motif is present at residues 367–371; it reads DDIYD.

The protein belongs to the terpene synthase family. Tpsd subfamily. Requires Mg(2+) as cofactor. The cofactor is Mn(2+).

The protein resides in the plastid. It localises to the chloroplast. It catalyses the reaction (2E)-geranyl diphosphate + H2O = (S)-alpha-terpineol + diphosphate. The catalysed reaction is (2E)-geranyl diphosphate + H2O = 1,8-cineole + diphosphate. The enzyme catalyses (2E)-geranyl diphosphate = beta-myrcene + diphosphate. It carries out the reaction (2E)-geranyl diphosphate = (1S,5S)-sabinene + diphosphate. It functions in the pathway terpene metabolism; oleoresin biosynthesis. It participates in secondary metabolite biosynthesis; terpenoid biosynthesis. Its function is as follows. Monoterpene synthase (TPS) involved in the biosynthesis of monoterpene natural products included in conifer oleoresin secretions and volatile emissions; these compounds contribute to biotic and abiotic stress defense against herbivores and pathogens. Catalyzes the conversion of (2E)-geranyl diphosphate (GPP) to alpha-terpineol and, to a lower extent, to 1,8-cineole, myrcene and (-)-sabinene. The protein is Alpha terpineol synthase, chloroplastic of Pinus contorta (Shore pine).